Consider the following 80-residue polypeptide: MAGGPRRGGRRRKKVCYFTANGITHIDYKDTELLKRFISERGKILPRRVTGTSAKYQRMLTLAIKRSRHMALLPYVKEEQ.

This sequence belongs to the bacterial ribosomal protein bS18 family. As to quaternary structure, part of the 30S ribosomal subunit. Forms a tight heterodimer with protein bS6.

Functionally, binds as a heterodimer with protein bS6 to the central domain of the 16S rRNA, where it helps stabilize the platform of the 30S subunit. This Staphylococcus saprophyticus subsp. saprophyticus (strain ATCC 15305 / DSM 20229 / NCIMB 8711 / NCTC 7292 / S-41) protein is Small ribosomal subunit protein bS18.